A 720-amino-acid chain; its full sequence is Fatty acid CoA ligase Acsl3 (720 aa).

Residues 21-41 (ILLYFIHFIISLYTILTYIPF) form a helical; Signal-anchor for type III membrane protein membrane-spanning segment. The Cytoplasmic portion of the chain corresponds to 42 to 720 (YFLCESKQEK…ADIERMYGRK (679 aa)). Ser683 is modified (phosphoserine).

The protein belongs to the ATP-dependent AMP-binding enzyme family. It depends on Mg(2+) as a cofactor.

Its subcellular location is the mitochondrion outer membrane. It localises to the peroxisome membrane. It is found in the microsome membrane. The protein localises to the endoplasmic reticulum membrane. The enzyme catalyses a long-chain fatty acid + ATP + CoA = a long-chain fatty acyl-CoA + AMP + diphosphate. It catalyses the reaction (E)-hexadec-2-enoate + ATP + CoA = (2E)-hexadecenoyl-CoA + AMP + diphosphate. It carries out the reaction (5Z,8Z,11Z,14Z)-eicosatetraenoate + ATP + CoA = (5Z,8Z,11Z,14Z)-eicosatetraenoyl-CoA + AMP + diphosphate. The catalysed reaction is 15-hydroxy-(5Z,8Z,11Z,13E)-eicosatetraenoate + ATP + CoA = 15-hydroxy-(5Z,8Z,11Z,13E)-eicosatetraenoyl-CoA + AMP + diphosphate. The enzyme catalyses 12-hydroxy-(5Z,8Z,10E,14Z)-eicosatetraenoate + ATP + CoA = 12-hydroxy-(5Z,8Z,10E,14Z)-eicosatetraenoyl-CoA + AMP + diphosphate. It catalyses the reaction 5-hydroxy-(6E,8Z,11Z,14Z)-eicosatetraenoate + ATP + CoA = 5-hydroxy-(6E,8Z,11Z,14Z)-eicosatetraenoyl-CoA + AMP + diphosphate. It carries out the reaction 14,15-epoxy-(5Z,8Z,11Z)-eicosatrienoate + ATP + CoA = 14,15-epoxy-(5Z,8Z,11Z)-eicosatrienoyl-CoA + AMP + diphosphate. The catalysed reaction is 11,12-epoxy-(5Z,8Z,14Z)-eicosatrienoate + ATP + CoA = 11,12-epoxy-(5Z,8Z,14Z)-eicosatrienoyl-CoA + AMP + diphosphate. The enzyme catalyses a medium-chain fatty acid + ATP + CoA = a medium-chain fatty acyl-CoA + AMP + diphosphate. It catalyses the reaction hexadecanoate + ATP + CoA = hexadecanoyl-CoA + AMP + diphosphate. It carries out the reaction tetradecanoate + ATP + CoA = tetradecanoyl-CoA + AMP + diphosphate. The catalysed reaction is dodecanoate + ATP + CoA = dodecanoyl-CoA + AMP + diphosphate. The enzyme catalyses octadecanoate + ATP + CoA = octadecanoyl-CoA + AMP + diphosphate. It catalyses the reaction eicosanoate + ATP + CoA = eicosanoyl-CoA + AMP + diphosphate. It carries out the reaction (9Z)-octadecenoate + ATP + CoA = (9Z)-octadecenoyl-CoA + AMP + diphosphate. The catalysed reaction is (9Z)-hexadecenoate + ATP + CoA = (9Z)-hexadecenoyl-CoA + AMP + diphosphate. The enzyme catalyses (9Z,12Z)-octadecadienoate + ATP + CoA = (9Z,12Z)-octadecadienoyl-CoA + AMP + diphosphate. It catalyses the reaction (9Z,12Z,15Z)-octadecatrienoate + ATP + CoA = (9Z,12Z,15Z)-octadecatrienoyl-CoA + AMP + diphosphate. It carries out the reaction (4Z,7Z,10Z,13Z,16Z,19Z)-docosahexaenoate + ATP + CoA = (4Z,7Z,10Z,13Z,16Z,19Z)-docosahexaenoyl-CoA + AMP + diphosphate. The catalysed reaction is (5Z,8Z,11Z,14Z,17Z)-eicosapentaenoate + ATP + CoA = (5Z,8Z,11Z,14Z,17Z)-eicosapentaenoyl-CoA + AMP + diphosphate. The enzyme catalyses a fatty acid + ATP + CoA = a fatty acyl-CoA + AMP + diphosphate. Its function is as follows. Acyl-CoA synthetases (ACSL) activates long-chain fatty acids for both synthesis of cellular lipids, and degradation via beta-oxidation. ACSL3 is required for the incorporation of fatty acids into phosphatidylcholine, the major phospholipid located on the surface of VLDL (very low density lipoproteins). Has mainly an anabolic role in energy metabolism. Mediates hepatic lipogenesis. Preferentially uses myristate, laurate, arachidonate and eicosapentaenoate as substrates. Both isoforms exhibit the same level of activity. The polypeptide is Fatty acid CoA ligase Acsl3 (Mus musculus (Mouse)).